Here is a 342-residue protein sequence, read N- to C-terminus: Sesquiterpene synthase MBR_09977 (342 aa).

Positions 91 and 96 each coordinate Mg(2+). Positions aspartate 91–aspartate 96 match the DDXXXD motif motif. Substrate is bound at residue arginine 184. Residues asparagine 230, serine 234, and glutamate 238 each contribute to the Mg(2+) site.

Belongs to the terpene synthase family. It depends on Mg(2+) as a cofactor.

It catalyses the reaction (2E,6E)-farnesyl diphosphate + H2O = (+)-corvol ether B + diphosphate. The catalysed reaction is (2E,6E)-farnesyl diphosphate + H2O = (+)-corvol ether A + diphosphate. In terms of biological role, terpene synthase that catalyzes the conversion of (2E,6E)-farnesyl diphosphate (FPP) into sesquiterpenes which are important for fungi-environment interactions. Produces a mixture consisting of 8 sesquiterpenes including corvol ethers A and B, as well as traces of epizonarene, gamma-cadinene, delta-cadinene, alpha-cadinene, alpha-cadinol, and an unidentified sesquiterpene. The major product is corvol ether A. The chain is Sesquiterpene synthase MBR_09977 from Metarhizium brunneum (strain ARSEF 3297).